Here is a 315-residue protein sequence, read N- to C-terminus: LCDKKIQLGINLTKGLGAGALPDVGKGAAEESIDEIMEHIKDSHMLFITAGMGGGTGTGAAPVIAKAAREARAVVKDKGAKEKKILTVGVVTKPFGFEGVRRMRIAELGLEELQKYVDTLIVIPNQNLFRIANEKTTFADAFQLADNVLHIGIRGVTDLMIMPGLINLDFADIETVMSEMGKAMIGTGEAEGEDRAISAAEAAISNPLLDNVSMKGAQGILINITGGGDMTLFEVDSAANRVREEVDENANIIFGATFDQAMEGRVRVSVLATGIDSCNDNSSVNQNKIPAEEKNFKWPYNQIPILETKEYASTE.

GTP-binding positions include 55–57, Glu-98, Arg-102, and Asp-146; that span reads GTG.

Belongs to the FtsZ family. Homodimer. Polymerizes to form a dynamic ring structure in a strictly GTP-dependent manner. Interacts directly with several other division proteins.

The protein localises to the cytoplasm. Its function is as follows. Essential cell division protein that forms a contractile ring structure (Z ring) at the future cell division site. The regulation of the ring assembly controls the timing and the location of cell division. One of the functions of the FtsZ ring is to recruit other cell division proteins to the septum to produce a new cell wall between the dividing cells. Binds GTP and shows GTPase activity. This chain is Cell division protein FtsZ, found in Wolbachia pipientis.